The sequence spans 170 residues: Nucleoside-triphosphatase THEP1 (170 aa).

ATP is bound by residues 7–14 (GMPGVGKT) and 98–105 (IIIIDELG).

The protein belongs to the THEP1 NTPase family.

It carries out the reaction a ribonucleoside 5'-triphosphate + H2O = a ribonucleoside 5'-diphosphate + phosphate + H(+). Its function is as follows. Has nucleotide phosphatase activity towards ATP, GTP, CTP, TTP and UTP. May hydrolyze nucleoside diphosphates with lower efficiency. The sequence is that of Nucleoside-triphosphatase THEP1 from Methanocaldococcus jannaschii (strain ATCC 43067 / DSM 2661 / JAL-1 / JCM 10045 / NBRC 100440) (Methanococcus jannaschii).